A 510-amino-acid polypeptide reads, in one-letter code: NAD(P)H-quinone oxidoreductase subunit 2 B, chloroplastic (510 aa).

Helical transmembrane passes span 24–44 (LLLF…GLIL), 57–77 (IPWL…ALLF), 99–119 (IFQF…VEYI), 124–144 (MAIT…MFLC), 149–169 (LITI…LSGY), 183–203 (YLLM…WLYG), 227–247 (PGIS…LSPA), 295–315 (WHLL…LIAI), 323–343 (MLAY…IVGD), 354–374 (YMLF…LFGL), 395–415 (ALSL…AGFF), 418–438 (LYLF…IGLL), and 484–504 (MIVC…IIAI).

The protein belongs to the complex I subunit 2 family. As to quaternary structure, NDH is composed of at least 16 different subunits, 5 of which are encoded in the nucleus.

The protein localises to the plastid. It is found in the chloroplast thylakoid membrane. The enzyme catalyses a plastoquinone + NADH + (n+1) H(+)(in) = a plastoquinol + NAD(+) + n H(+)(out). It carries out the reaction a plastoquinone + NADPH + (n+1) H(+)(in) = a plastoquinol + NADP(+) + n H(+)(out). Its function is as follows. NDH shuttles electrons from NAD(P)H:plastoquinone, via FMN and iron-sulfur (Fe-S) centers, to quinones in the photosynthetic chain and possibly in a chloroplast respiratory chain. The immediate electron acceptor for the enzyme in this species is believed to be plastoquinone. Couples the redox reaction to proton translocation, and thus conserves the redox energy in a proton gradient. The chain is NAD(P)H-quinone oxidoreductase subunit 2 B, chloroplastic from Daucus carota (Wild carrot).